The following is a 141-amino-acid chain: Hemoglobin subunit alpha (141 aa).

The 141-residue stretch at 1 to 141 folds into the Globin domain; the sequence is VLSGTDKTNV…VGLVLTAKYR (141 aa). His-58 provides a ligand contact to O2. His-87 is a binding site for heme b.

It belongs to the globin family. In terms of assembly, heterotetramer of two alpha chains and two beta chains. As to expression, red blood cells.

In terms of biological role, involved in oxygen transport from the lung to the various peripheral tissues. The protein is Hemoglobin subunit alpha (HBA) of Psittacula krameri (Rose-ringed parakeet).